Consider the following 1143-residue polypeptide: MHGPVSRSSSSSNMTDVSSPAGGAASPVEMTTSSSSAATTSASSSKPLTNGANKTTISTVAGGVAPGAVPGPGSGAIPASSSSGNQVKLEHHHRQSNNNRPAATNRSSETKLRSPAGESDGASRLMTPAGSSSSPSQSPSQTQASIQTQTSQQDRLAKASTTASQQDVDEVARLFEEKPEAFEKWLTERAPPEALSRLQEFIENRKPHKRPSVTSDLFQQWMAASPTVQQKSPRSLSNSSASSLPECRRHLMDLDEGELFMELIRDVANELDIDVLCHKILVNVGLLTHADRGSLFLAKGTPTNKYLVAKLFDVTQKTALKDAVTRASAEEIIIPFGIGIAGMVAQTKQMINIKEAYKDARFNCEIDLKTGYKTNAILCMPICNYEGDIIGVAQIINKTNGCMEFDEHDVEIFRRYLTFCGIGIQNAQLFEMSVQEYRRNQILLNLARSIFEEQNNLECLVTKIMTEARELLKCERCSVFLVDLDCCEASHLEKIIEKPNQQATRAIKSADSFEEKKMRNRFTVLFELGGEYQAANVSRPSVSELSSSTLAQIAQFVATTGQTVNICDVIEWVRDHNQIRAEDEIDSTQAILCMPIMNAQKKVIGVAQLINKANGVPFTDSDASIFEAFAIFCGLGIHNTQMYENACKLMAKQKVALECLSYHATASQDQTEKLTQDVIAEAESYNLYSFTFTDFELVDDDTCRAVLRMFMQCNLVSQFQIPYDVLCRWVLSVRKNYRPVKYHNWRHALNVAQTMFAMLKTGKMERFMTDLEILGLLVACLCHDLDHRGTNNAFQTKTESPLAILYTTSTMEHHHFDQCVMILNSEGNNIFQALSPEDYRSVMKTVESAILSTDLAMYFKKRNAFLELVENGEFDWQGEEKKDLLCGMMMTACDVSAIAKPWEVQHKVAKLVADEFFDQGDLEKLQLNTQPVAMMDRERKDELPKMQVGFIDVICLPLYRVLCDTFPWITPLYEGTLENRRNWQDLAEKVEMGLTWIDHDTIDKPVEEFAACADEEIKDIEFTVTTLNCNQQSQHGSEDSHTPEHQRSGSRLSMKKTGALGKAVRSKLSKTLYNSMDGSKPKTSLKLLESHVSEDMDDKSPTSPSQPQASGSMGRMSASSSTSSTGGQMVDKSKKRSKLCALL.

Low complexity-rich tracts occupy residues 1-19 (MHGP…DVSS) and 31-45 (TTSS…ASSS). The interval 1-167 (MHGPVSRSSS…KASTTASQQD (167 aa)) is disordered. Positions 46-59 (KPLTNGANKTTIST) are enriched in polar residues. The segment covering 75-84 (GAIPASSSSG) has biased composition (low complexity). The segment covering 96–107 (SNNNRPAATNRS) has biased composition (polar residues). A compositionally biased stretch (low complexity) spans 131-153 (SSSSPSQSPSQTQASIQTQTSQQ). GAF domains follow at residues 272-424 (DIDV…GIGI) and 456-637 (NLEC…GLGI). The region spanning 667–990 (SQDQTEKLTQ…RNWQDLAEKV (324 aa)) is the PDEase domain. The active-site Proton donor is the H743. A divalent metal cation contacts are provided by H747, H783, D784, and D894. 2 disordered regions span residues 1031-1060 (QQSQ…TGAL) and 1090-1143 (SHVS…CALL). Basic and acidic residues-rich tracts occupy residues 1036–1047 (GSEDSHTPEHQR) and 1090–1100 (SHVSEDMDDKS). Over residues 1109-1127 (ASGSMGRMSASSSTSSTGG) the composition is skewed to low complexity. Residues 1133–1143 (SKKRSKLCALL) show a composition bias toward basic residues. C1140 carries the cysteine methyl ester modification. C1140 carries S-farnesyl cysteine lipidation. Positions 1141-1143 (ALL) are cleaved as a propeptide — removed in mature form.

Belongs to the cyclic nucleotide phosphodiesterase family. Interacts with PrBP. A divalent metal cation is required as a cofactor.

The protein resides in the cell membrane. It catalyses the reaction 3',5'-cyclic GMP + H2O = GMP + H(+). Functionally, has a role regulating cGMP transport in Malpighian tubule principal cells. This is cGMP-specific 3',5'-cyclic phosphodiesterase from Drosophila simulans (Fruit fly).